The sequence spans 464 residues: Argininosuccinate lyase (464 aa).

Belongs to the lyase 1 family. Argininosuccinate lyase subfamily.

It is found in the cytoplasm. The catalysed reaction is 2-(N(omega)-L-arginino)succinate = fumarate + L-arginine. The protein operates within amino-acid biosynthesis; L-arginine biosynthesis; L-arginine from L-ornithine and carbamoyl phosphate: step 3/3. The polypeptide is Argininosuccinate lyase (Pseudomonas aeruginosa (strain LESB58)).